A 300-amino-acid chain; its full sequence is ADP,ATP carrier protein 2 (300 aa).

3 Solcar repeats span residues 8–100, 113–203, and 214–299; these read VAFI…YKQV, RYFI…ARGM, and VSWA…IKKV. 5 helical membrane-spanning segments follow: residues 10-39, 77-101, 112-132, 181-201, and 213-233; these read FIKD…LLLQ, LANV…KQVF, TRYF…SLCF, VSVQ…DTAR, and YVSW…SYPF. Positions 82 and 94 each coordinate ADP. Residue arginine 237 coordinates ADP. The interval 237–242 is important for transport activity; sequence RRRMMM. Positions 237-242 match the Nucleotide carrier signature motif motif; it reads RRRMMM. The helical transmembrane segment at 276-293 threads the bilayer; the sequence is AFSNVLRGTGGAFVLVLY.

It belongs to the mitochondrial carrier (TC 2.A.29) family. Monomer.

It localises to the mitochondrion inner membrane. It carries out the reaction ADP(in) + ATP(out) = ADP(out) + ATP(in). The matrix-open state (m-state) is inhibited by the membrane-permeable bongkrekic acid (BKA). The cytoplasmic-open state (c-state) is inhibited by the membrane-impermeable toxic inhibitor carboxyatractyloside (CATR). ADP:ATP antiporter that mediates import of ADP into the mitochondrial matrix for ATP synthesis, and export of ATP out to fuel the cell. Cycles between the cytoplasmic-open state (c-state) and the matrix-open state (m-state): operates by the alternating access mechanism with a single substrate-binding site intermittently exposed to either the cytosolic (c-state) or matrix (m-state) side of the inner mitochondrial membrane. This is ADP,ATP carrier protein 2 from Anopheles gambiae (African malaria mosquito).